Consider the following 660-residue polypeptide: UvrABC system protein B (660 aa).

One can recognise a Helicase ATP-binding domain in the interval 25 to 183 (EGLNKGLKHQ…ALINIHYERN (159 aa)). 38–45 (GVTGSGKT) is a binding site for ATP. A Beta-hairpin motif is present at residues 91–114 (YYDYYQPEAYLPTTDTYIEKDSSV). The Helicase C-terminal domain maps to 431-593 (QIDDLIGEVN…IVPQTIHKAL (163 aa)). The region spanning 622-657 (ADMVIELEAEMHLAAKNLEFERAAALRDNIKELRST) is the UVR domain.

Belongs to the UvrB family. In terms of assembly, forms a heterotetramer with UvrA during the search for lesions. Interacts with UvrC in an incision complex.

The protein resides in the cytoplasm. Functionally, the UvrABC repair system catalyzes the recognition and processing of DNA lesions. A damage recognition complex composed of 2 UvrA and 2 UvrB subunits scans DNA for abnormalities. Upon binding of the UvrA(2)B(2) complex to a putative damaged site, the DNA wraps around one UvrB monomer. DNA wrap is dependent on ATP binding by UvrB and probably causes local melting of the DNA helix, facilitating insertion of UvrB beta-hairpin between the DNA strands. Then UvrB probes one DNA strand for the presence of a lesion. If a lesion is found the UvrA subunits dissociate and the UvrB-DNA preincision complex is formed. This complex is subsequently bound by UvrC and the second UvrB is released. If no lesion is found, the DNA wraps around the other UvrB subunit that will check the other stand for damage. This is UvrABC system protein B from Methanococcoides burtonii (strain DSM 6242 / NBRC 107633 / OCM 468 / ACE-M).